Reading from the N-terminus, the 360-residue chain is Cinnamyl alcohol dehydrogenase 2 (360 aa).

The 329-residue stretch at 23–351 (GVLSPFNFSR…KADVKYRFVI (329 aa)) folds into the Enoyl reductase (ER) domain. Cysteine 50 is a Zn(2+) binding site. Serine 52 serves as a coordination point for an alcohol. An NADP(+)-binding site is contributed by serine 52. Residues aspartate 53, histidine 72, glutamate 73, cysteine 103, cysteine 106, cysteine 109, cysteine 117, and cysteine 166 each coordinate Zn(2+). Histidine 72 contributes to the an alcohol binding site. NADP(+) is bound by residues leucine 192, glycine 194, leucine 195, serine 214, threonine 215, serine 216, lysine 219, lysine 220, valine 277, alanine 279, serine 301, and arginine 348.

The protein belongs to the zinc-containing alcohol dehydrogenase family. Class-P subfamily. Homodimer. It depends on Zn(2+) as a cofactor. Mainly expressed in young roots and, to a lower extent, in stems and leaves.

It is found in the cytoplasm. It carries out the reaction (E)-cinnamyl alcohol + NADP(+) = (E)-cinnamaldehyde + NADPH + H(+). Alcohol dehydrogenase that catalyzes the conversion of (E)-cinnamyl alcohol to (E)-cinnamaldehyde. The protein is Cinnamyl alcohol dehydrogenase 2 of Rauvolfia serpentina (Serpentine wood).